We begin with the raw amino-acid sequence, 375 residues long: Probable pectin lyase C (375 aa).

The signal sequence occupies residues 1–20; sequence MKITSTIPAVLLGLAPLSAA. 2 disulfides stabilise this stretch: Cys-83-Cys-100 and Cys-92-Cys-220. Arg-250 is a catalytic residue. Cys-317 and Cys-325 are disulfide-bonded.

It belongs to the polysaccharide lyase 1 family.

The protein localises to the secreted. It carries out the reaction Eliminative cleavage of (1-&gt;4)-alpha-D-galacturonan methyl ester to give oligosaccharides with 4-deoxy-6-O-methyl-alpha-D-galact-4-enuronosyl groups at their non-reducing ends.. In terms of biological role, pectinolytic enzymes consist of four classes of enzymes: pectin lyase, polygalacturonase, pectin methylesterase and rhamnogalacturonase. Among pectinolytic enzymes, pectin lyase is the most important in depolymerization of pectin, since it cleaves internal glycosidic bonds of highly methylated pectins. This is Probable pectin lyase C (pelC) from Aspergillus oryzae (strain ATCC 42149 / RIB 40) (Yellow koji mold).